The following is a 59-amino-acid chain: Alpha-like toxin CsEv5 (59 aa).

An LCN-type CS-alpha/beta domain is found at 1-59 (KDGYPVDSKGCKLSCVANNYCDNQCKMKKASGGHCYAMSCYCEGLPENAKVSDSATNIC). Cystine bridges form between Cys11/Cys59, Cys15/Cys35, Cys21/Cys40, and Cys25/Cys42.

This sequence belongs to the long (4 C-C) scorpion toxin superfamily. Sodium channel inhibitor family. As to expression, expressed by the venom gland.

It is found in the secreted. In terms of biological role, binds voltage-independently sodium channels (Nav) and inhibits the inactivation of the activated channels, thereby blocking neuronal transmission. Is highly toxic to insects and barely toxic to mammals. As it does not compete with the classical alpha-toxin AaH2, this toxin is considered as an alpha-like toxin. This chain is Alpha-like toxin CsEv5, found in Centruroides sculpturatus (Arizona bark scorpion).